Here is a 412-residue protein sequence, read N- to C-terminus: Putative competence-damage inducible protein (412 aa).

Belongs to the CinA family.

This is Putative competence-damage inducible protein from Bacillus anthracis.